An 89-amino-acid polypeptide reads, in one-letter code: Rho beta-crystallin (89 aa).

Histidine 31 contacts substrate.

It belongs to the aldo/keto reductase family. In terms of assembly, monomer.

This chain is Rho beta-crystallin, found in Lepidodactylus lugubris (Mourning gecko).